Consider the following 506-residue polypeptide: Glucosidase 2 subunit beta (506 aa).

The signal sequence occupies residues 1–23 (MKFSQWYTLTAPLLISSLYTVNA). A disulfide bridge links Cys-86 with Cys-108. 2 coiled-coil regions span residues 172–243 (SLVA…LYET) and 338–374 (ESYR…LEYH). The MRH domain occupies 279–474 (ESCNNHLSML…KMKSPAACSP (196 aa)). Cystine bridges form between Cys-431/Cys-460 and Cys-445/Cys-472. The ER retrieval sequence motif lies at 503-506 (VDEL).

As to quaternary structure, heterodimer of a catalytic subunit alpha (gls2) and a subunit beta (gtb1).

It is found in the endoplasmic reticulum. In terms of biological role, subunit of glucosidase 2, which cleaves sequentially the 2 innermost alpha-1,3-linked glucose residues from the Glc(2)Man(9)GlcNAc(2) oligosaccharide precursor of immature glycoproteins in the endoplasmic reticulum (ER). Specifically required for the cleavage of the final glucose. The subunit beta retains the catalytic subunit alpha in the ER. The polypeptide is Glucosidase 2 subunit beta (gtb1) (Schizosaccharomyces pombe (strain 972 / ATCC 24843) (Fission yeast)).